Reading from the N-terminus, the 448-residue chain is Adenosylhomocysteinase (448 aa).

3 residues coordinate substrate: threonine 61, aspartate 136, and glutamate 161. 162-164 (TTA) serves as a coordination point for NAD(+). Substrate is bound by residues lysine 191 and aspartate 195. Residues asparagine 196, 225 to 230 (GYGDVG), glutamate 248, asparagine 283, 304 to 306 (IGH), and asparagine 360 each bind NAD(+).

The protein belongs to the adenosylhomocysteinase family. NAD(+) serves as cofactor.

It localises to the cytoplasm. It catalyses the reaction S-adenosyl-L-homocysteine + H2O = L-homocysteine + adenosine. The protein operates within amino-acid biosynthesis; L-homocysteine biosynthesis; L-homocysteine from S-adenosyl-L-homocysteine: step 1/1. Functionally, may play a key role in the regulation of the intracellular concentration of adenosylhomocysteine. In Rhodopirellula baltica (strain DSM 10527 / NCIMB 13988 / SH1), this protein is Adenosylhomocysteinase.